A 72-amino-acid chain; its full sequence is Galensin (72 aa).

An N-terminal signal peptide occupies residues 1–22; the sequence is MLTLKKSMLLLFFLGLVSVSLA. Residues 23–48 constitute a propeptide that is removed on maturation; that stretch reads DDKREDEAEEGEDKRAAEEERNVEKR. At phenylalanine 71 the chain carries Phenylalanine amide.

Belongs to the frog skin active peptide (FSAP) family. Brevinin subfamily. In terms of assembly, homodimer; disulfide-linked. As to expression, expressed by the skin glands.

It is found in the secreted. Antibacterial activity against the Gram-positive bacterium M.luteus and the Gram-negative bacterium E.coli. This is Galensin from Kassina senegalensis (Senegal running frog).